The sequence spans 151 residues: MAKRVQVALTESIASLGKEGDLVDVAPGYARNFLLPYGKAMNVTPAVLKQIERKKEKEKIAAGKLKQEALDFQTALSTIGRFTIKKQVGEDGVLFGTVTNGDVAEAIEAATKKEIDRRNITVPDIHNLGAFTAKIKLHPEVNAEVNIEVTS.

Belongs to the bacterial ribosomal protein bL9 family.

Binds to the 23S rRNA. The chain is Large ribosomal subunit protein bL9 from Prochlorococcus marinus (strain AS9601).